A 156-amino-acid chain; its full sequence is Small ribosomal subunit protein uS7 (156 aa).

This sequence belongs to the universal ribosomal protein uS7 family. As to quaternary structure, part of the 30S ribosomal subunit. Contacts proteins S9 and S11.

One of the primary rRNA binding proteins, it binds directly to 16S rRNA where it nucleates assembly of the head domain of the 30S subunit. Is located at the subunit interface close to the decoding center, probably blocks exit of the E-site tRNA. The chain is Small ribosomal subunit protein uS7 from Natranaerobius thermophilus (strain ATCC BAA-1301 / DSM 18059 / JW/NM-WN-LF).